The chain runs to 367 residues: UDP-N-acetylenolpyruvoylglucosamine reductase (367 aa).

An FAD-binding PCMH-type domain is found at 29–205; it reads VGPVAQRVIT…LEVEFKLDAS (177 aa). The active site involves Arg-177. The active-site Proton donor is the Ser-260. Glu-359 is a catalytic residue.

This sequence belongs to the MurB family. FAD is required as a cofactor.

It is found in the cytoplasm. It carries out the reaction UDP-N-acetyl-alpha-D-muramate + NADP(+) = UDP-N-acetyl-3-O-(1-carboxyvinyl)-alpha-D-glucosamine + NADPH + H(+). It participates in cell wall biogenesis; peptidoglycan biosynthesis. In terms of biological role, cell wall formation. This chain is UDP-N-acetylenolpyruvoylglucosamine reductase, found in Mycobacterium leprae (strain Br4923).